A 435-amino-acid chain; its full sequence is Enolase (435 aa).

Positions 155 and 164 each coordinate substrate. Residue glutamate 205 is the Proton donor of the active site. Positions 243, 292, and 319 each coordinate Mg(2+). Residues glutamate 292, aspartate 319, lysine 344, 371-374 (SHRS), and lysine 395 contribute to the substrate site. Lysine 344 serves as the catalytic Proton acceptor.

The protein belongs to the enolase family. As to quaternary structure, homooctamer. Requires Mg(2+) as cofactor.

It localises to the cytoplasm. Its subcellular location is the secreted. The protein resides in the cell surface. It catalyses the reaction (2R)-2-phosphoglycerate = phosphoenolpyruvate + H2O. It functions in the pathway carbohydrate degradation; glycolysis; pyruvate from D-glyceraldehyde 3-phosphate: step 4/5. Its function is as follows. Catalyzes the reversible conversion of 2-phosphoglycerate (2-PG) into phosphoenolpyruvate (PEP). It is essential for the degradation of carbohydrates via glycolysis. In terms of biological role, 'Moonlights' as a plasminogen receptor and plasmin activator. Binds host (human) plasminogen in vitro; enhances the activity of host tissue-specific plasminogen activator (tPA). This Streptococcus pyogenes serotype M1 protein is Enolase.